A 375-amino-acid polypeptide reads, in one-letter code: Queuine tRNA-ribosyltransferase (375 aa).

Catalysis depends on D93, which acts as the Proton acceptor. Substrate-binding positions include 93–97 (DSGGY), D147, Q194, and G221. An RNA binding region spans residues 252-258 (GVGKPDD). Catalysis depends on D271, which acts as the Nucleophile. Residues 276-280 (TRSGR) form an RNA binding; important for wobble base 34 recognition region. C309, C311, C314, and H340 together coordinate Zn(2+).

This sequence belongs to the queuine tRNA-ribosyltransferase family. Homodimer. Within each dimer, one monomer is responsible for RNA recognition and catalysis, while the other monomer binds to the replacement base PreQ1. The cofactor is Zn(2+).

The catalysed reaction is 7-aminomethyl-7-carbaguanine + guanosine(34) in tRNA = 7-aminomethyl-7-carbaguanosine(34) in tRNA + guanine. The protein operates within tRNA modification; tRNA-queuosine biosynthesis. In terms of biological role, catalyzes the base-exchange of a guanine (G) residue with the queuine precursor 7-aminomethyl-7-deazaguanine (PreQ1) at position 34 (anticodon wobble position) in tRNAs with GU(N) anticodons (tRNA-Asp, -Asn, -His and -Tyr). Catalysis occurs through a double-displacement mechanism. The nucleophile active site attacks the C1' of nucleotide 34 to detach the guanine base from the RNA, forming a covalent enzyme-RNA intermediate. The proton acceptor active site deprotonates the incoming PreQ1, allowing a nucleophilic attack on the C1' of the ribose to form the product. After dissociation, two additional enzymatic reactions on the tRNA convert PreQ1 to queuine (Q), resulting in the hypermodified nucleoside queuosine (7-(((4,5-cis-dihydroxy-2-cyclopenten-1-yl)amino)methyl)-7-deazaguanosine). In Sphingopyxis alaskensis (strain DSM 13593 / LMG 18877 / RB2256) (Sphingomonas alaskensis), this protein is Queuine tRNA-ribosyltransferase.